The chain runs to 417 residues: NADH-quinone oxidoreductase subunit D (417 aa).

Belongs to the complex I 49 kDa subunit family. In terms of assembly, NDH-1 is composed of 14 different subunits. Subunits NuoB, C, D, E, F, and G constitute the peripheral sector of the complex.

Its subcellular location is the cell inner membrane. It carries out the reaction a quinone + NADH + 5 H(+)(in) = a quinol + NAD(+) + 4 H(+)(out). In terms of biological role, NDH-1 shuttles electrons from NADH, via FMN and iron-sulfur (Fe-S) centers, to quinones in the respiratory chain. The immediate electron acceptor for the enzyme in this species is believed to be ubiquinone. Couples the redox reaction to proton translocation (for every two electrons transferred, four hydrogen ions are translocated across the cytoplasmic membrane), and thus conserves the redox energy in a proton gradient. This Legionella pneumophila subsp. pneumophila (strain Philadelphia 1 / ATCC 33152 / DSM 7513) protein is NADH-quinone oxidoreductase subunit D.